We begin with the raw amino-acid sequence, 57 residues long: COP9 signalosome complex subunit 9 (57 aa).

This sequence belongs to the CSN9 family. Component of the CSN complex, probably composed of cops1, cops2, cops3, cops4, cops5, cops6, cops7, cops8 and cops9.

Its subcellular location is the nucleus. It localises to the cytoplasm. The protein localises to the nucleoplasm. In terms of biological role, component of the COP9 signalosome complex (CSN), a complex involved in various cellular and developmental processes. The CSN complex is an essential regulator of the ubiquitin (Ubl) conjugation pathway by mediating the deneddylation of the cullin subunits of SCF-type E3 ligase complexes, leading to decrease the Ubl ligase activity. May play a role in cell proliferation. The chain is COP9 signalosome complex subunit 9 from Xenopus tropicalis (Western clawed frog).